We begin with the raw amino-acid sequence, 211 residues long: Type II secretion system protein J (211 aa).

The propeptide at 1 to 7 (MRPRAAG) is leader sequence. Phe8 carries the N-methylphenylalanine modification. Residues 8-28 (FTLIEVLLATMLLVGGLALAF) form a helical membrane-spanning segment.

Belongs to the GSP J family.

The protein resides in the membrane. Functionally, involved in a type II secretion system (T2SS, formerly general secretion pathway, GSP) for the export of proteins. This is Type II secretion system protein J (xpsJ) from Xanthomonas campestris pv. campestris (strain ATCC 33913 / DSM 3586 / NCPPB 528 / LMG 568 / P 25).